Reading from the N-terminus, the 377-residue chain is Protein FAM199X-B (377 aa).

A compositionally biased stretch (basic and acidic residues) spans 240–254 (KEHSPRQRCTRESWK). The segment at 240-350 (KEHSPRQRCT…EQRQARKERI (111 aa)) is disordered. The segment covering 256-301 (TSYSTASTSGVSGASVSSSSASMVSTASSTGSSGGNSASNSSANMS) has biased composition (low complexity). Positions 319–338 (DSKKRSKQRKLQQKALRKRQ) are enriched in basic residues. A coiled-coil region spans residues 321–349 (KKRSKQRKLQQKALRKRQLKEQRQARKER). The segment covering 339-350 (LKEQRQARKERI) has biased composition (basic and acidic residues).

It belongs to the FAM199 family.

The sequence is that of Protein FAM199X-B (fam199x-b) from Xenopus laevis (African clawed frog).